The chain runs to 291 residues: ATP phosphoribosyltransferase (291 aa).

It belongs to the ATP phosphoribosyltransferase family. Long subfamily. It depends on Mg(2+) as a cofactor.

The protein resides in the cytoplasm. The catalysed reaction is 1-(5-phospho-beta-D-ribosyl)-ATP + diphosphate = 5-phospho-alpha-D-ribose 1-diphosphate + ATP. The protein operates within amino-acid biosynthesis; L-histidine biosynthesis; L-histidine from 5-phospho-alpha-D-ribose 1-diphosphate: step 1/9. With respect to regulation, feedback inhibited by histidine. Its function is as follows. Catalyzes the condensation of ATP and 5-phosphoribose 1-diphosphate to form N'-(5'-phosphoribosyl)-ATP (PR-ATP). Has a crucial role in the pathway because the rate of histidine biosynthesis seems to be controlled primarily by regulation of HisG enzymatic activity. The protein is ATP phosphoribosyltransferase of Geotalea daltonii (strain DSM 22248 / JCM 15807 / FRC-32) (Geobacter daltonii).